Reading from the N-terminus, the 353-residue chain is Abasic site processing protein HMCES (353 aa).

The active-site Nucleophile is the Cys2. Position 2 is a thiazolidine linkage to a ring-opened DNA abasic site (Cys2). The active site involves Glu127. Residues Lys148 and Lys151 each participate in a glycyl lysine isopeptide (Lys-Gly) (interchain with G-Cter in SUMO2) cross-link. Ser160 bears the Phosphoserine mark. Residues Lys274 and Lys275 each participate in a glycyl lysine isopeptide (Lys-Gly) (interchain with G-Cter in SUMO2) cross-link. Positions 292–353 (TKSPKKEVPD…DEPMAKKPNS (62 aa)) are disordered. Ser294 carries the phosphoserine modification. Positions 295–307 (PKKEVPDSPKKDA) are enriched in basic and acidic residues. Lys305 participates in a covalent cross-link: Glycyl lysine isopeptide (Lys-Gly) (interchain with G-Cter in SUMO2). Residue Ser321 is modified to Phosphoserine. The short motif at 332–338 (SFLDRWL) is the PIP-box element. Residues 336–353 (RWLKQEKEDEPMAKKPNS) show a composition bias toward basic and acidic residues. Glycyl lysine isopeptide (Lys-Gly) (interchain with G-Cter in SUMO2) cross-links involve residues Lys339 and Lys342.

This sequence belongs to the SOS response-associated peptidase family. As to quaternary structure, interacts (via PIP-box motif) with PCNA. As to expression, expressed in embryonic stem cells.

It localises to the chromosome. Its activity is regulated as follows. Formation and reversal of DNA-protein cross-link depends on DNA context. Catalyzes formation of the thiazolidine linkage in presence of abasic sites in single-stranded DNA. Mediates the reversal of the thiazolidine cross-link in presence of double stranded DNA. In terms of biological role, sensor of abasic sites in single-stranded DNA (ssDNA) required to preserve genome integrity by promoting error-free repair of abasic sites. Acts as an enzyme that recognizes and binds abasic sites in ssDNA at replication forks and chemically modifies the lesion by forming a covalent cross-link with DNA: forms a stable thiazolidine linkage between a ring-opened abasic site and the alpha-amino and sulfhydryl substituents of its N-terminal catalytic cysteine residue. Promotes error-free repair by protecting abasic sites from translesion synthesis (TLS) polymerases and endonucleases that are error-prone and would generate mutations and double-strand breaks. The HMCES DNA-protein cross-link is then either reversed or degraded. HMCES is able to catalyze the reversal of its thiazolidine cross-link and cycle between a cross-link and a non-cross-linked state depending on DNA context: mediates self-reversal of the thiazolidine cross-link in double stranded DNA, allowing APEX1 to initiate downstream repair of abasic sites. The HMCES DNA-protein cross-link can also be degraded by the SPRTN metalloprotease following unfolding by the BRIP1/FANCJ helicase. Has preference for ssDNA, but can also accommodate double-stranded DNA with 3' or 5' overhang (dsDNA), and dsDNA-ssDNA 3' junction. Plays a protective role during somatic hypermutation of immunoglobulin genes in B-cells: acts via its ability to form covalent cross-links with abasic sites, thereby limiting the accumulation of deletions in somatic hypermutation target regions. Also involved in class switch recombination (CSR) in B-cells independently of the formation of a DNA-protein cross-link: acts by binding and protecting ssDNA overhangs to promote DNA double-strand break repair through the microhomology-mediated alternative-end-joining (Alt-EJ) pathway. Acts as a protease: mediates autocatalytic processing of its N-terminal methionine in order to expose the catalytic cysteine. The polypeptide is Abasic site processing protein HMCES (Mus musculus (Mouse)).